An 894-amino-acid chain; its full sequence is Microsomal triglyceride transfer protein large subunit (894 aa).

Residues 1–18 form the signal peptide; it reads MILLAVLFLCFISSYSAS. Residues 28 to 662 form the Vitellogenin domain; the sequence is LNNDRLYKLK…YVGKTPLHAI (635 aa). Cys174 and Cys194 are joined by a disulfide.

In terms of assembly, heterodimer; heterodimerizes with the protein disulfide isomerase (P4HB/PDI). Interacts with APOB. Interacts with PRAP1.

It localises to the endoplasmic reticulum. It is found in the golgi apparatus. The catalysed reaction is a 1,2-diacyl-sn-glycero-3-phosphocholine(in) = a 1,2-diacyl-sn-glycero-3-phosphocholine(out). It catalyses the reaction a 1,2-diacyl-sn-glycero-3-phosphoethanolamine(in) = a 1,2-diacyl-sn-glycero-3-phosphoethanolamine(out). The enzyme catalyses a cholesterol ester(in) = a cholesterol ester(out). It carries out the reaction a triacyl-sn-glycerol(in) = a triacyl-sn-glycerol(out). Catalyzes the transport of triglyceride, cholesteryl ester, and phospholipid between phospholipid surfaces. Required for the assembly and secretion of plasma lipoproteins that contain apolipoprotein B. May be involved in regulating cholesteryl ester biosynthesis in cells that produce lipoproteins. This Sus scrofa (Pig) protein is Microsomal triglyceride transfer protein large subunit (MTTP).